The chain runs to 219 residues: Protein-L-isoaspartate O-methyltransferase 2 (219 aa).

Residue Ser-67 is part of the active site.

It belongs to the methyltransferase superfamily. L-isoaspartyl/D-aspartyl protein methyltransferase family.

It is found in the cytoplasm. It catalyses the reaction [protein]-L-isoaspartate + S-adenosyl-L-methionine = [protein]-L-isoaspartate alpha-methyl ester + S-adenosyl-L-homocysteine. In terms of biological role, catalyzes the methyl esterification of L-isoaspartyl residues in peptides and proteins that result from spontaneous decomposition of normal L-aspartyl and L-asparaginyl residues. It plays a role in the repair and/or degradation of damaged proteins. In Nitrosococcus oceani (strain ATCC 19707 / BCRC 17464 / JCM 30415 / NCIMB 11848 / C-107), this protein is Protein-L-isoaspartate O-methyltransferase 2.